The sequence spans 196 residues: ATP-dependent Clp protease proteolytic subunit (196 aa).

Serine 101 serves as the catalytic Nucleophile. The active site involves histidine 126.

It belongs to the peptidase S14 family. As to quaternary structure, component of the chloroplastic Clp protease core complex.

It localises to the plastid. Its subcellular location is the chloroplast stroma. It carries out the reaction Hydrolysis of proteins to small peptides in the presence of ATP and magnesium. alpha-casein is the usual test substrate. In the absence of ATP, only oligopeptides shorter than five residues are hydrolyzed (such as succinyl-Leu-Tyr-|-NHMec, and Leu-Tyr-Leu-|-Tyr-Trp, in which cleavage of the -Tyr-|-Leu- and -Tyr-|-Trp bonds also occurs).. Functionally, cleaves peptides in various proteins in a process that requires ATP hydrolysis. Has a chymotrypsin-like activity. Plays a major role in the degradation of misfolded proteins. This Nasturtium officinale (Watercress) protein is ATP-dependent Clp protease proteolytic subunit.